Here is a 1069-residue protein sequence, read N- to C-terminus: Regulator of nonsense transcripts 1 (1069 aa).

Residues 1-86 are disordered; the sequence is MDDSDDEYSR…SEKSLTEEQH (86 aa). Polar residues predominate over residues 28-50; sequence IGNTQDSQFAYEQFSVPTQSSQA. Positions 51–65 are enriched in low complexity; the sequence is TDLLPGGTDGTTNDL. A compositionally biased stretch (basic and acidic residues) spans 77–86; sequence SEKSLTEEQH. In terms of domain architecture, Upf1 CH-rich spans 87-244; that stretch reads EQKLPEHACR…VRMEELWRDH (158 aa). Positions 95, 98, 109, 112, 117, 127, 131, 137, 155, 158, 181, and 185 each coordinate Zn(2+). The segment at 95-127 is C3H; it reads CRYCGISDPLCVAKCTVCRKWFCNSNDGTSGGH. Residues 109 to 137 are CC/SHH/C; the sequence is CTVCRKWFCNSNDGTSGGHIVHHMVRSQH. The C4 stretch occupies residues 155–185; that stretch reads CYRCGSKNVFNLGFIPGKKDQVVVIICRTPC. Residues Q450, 467–474, Q639, Y676, and E807 each bind ATP; that span reads GPPGTGKT. Residues 966–1069 are disordered; that stretch reads ARNQKDRRRG…MDDLLFSQDC (104 aa). Positions 991–1013 are enriched in low complexity; sequence SQGMMSQQSQQYPPQGASSQSQY.

This sequence belongs to the DNA2/NAM7 helicase family. In terms of processing, phosphorylated probably by smg-1. Smg-3 and smg-4 are required for phosphorylation.

It is found in the cytoplasm. It catalyses the reaction ATP + H2O = ADP + phosphate + H(+). In terms of biological role, RNA-dependent helicase required for nonsense-mediated decay (NMD) of aberrant mRNAs containing premature stop codons and modulates the expression level of normal mRNAs. Is recruited to mRNAs upon translation termination and undergoes a cycle of phosphorylation and dephosphorylation; its phosphorylation appears to be a key step in NMD. The formation of an smg-2-3-4 surveillance complex is believed to activate NMD. In Caenorhabditis elegans, this protein is Regulator of nonsense transcripts 1 (smg-2).